The following is a 1133-amino-acid chain: Envelopment polyprotein (1133 aa).

The N-terminal stretch at 1 to 16 is a signal peptide; the sequence is MWSLLLLAALVGQGFA. Residues 17–484 lie on the Lumenal side of the membrane; sequence LKNVFDMRIQ…PGFHGWATAA (468 aa). 10 disulfides stabilise this stretch: Cys-61–Cys-155, Cys-107–Cys-126, Cys-131–Cys-136, Cys-173–Cys-183, Cys-208–Cys-245, Cys-232–Cys-349, Cys-374–Cys-433, Cys-378–Cys-387, Cys-403–Cys-422, and Cys-450–Cys-473. Asn-132 carries an N-linked (GlcNAc...) asparagine; by host glycan. N-linked (GlcNAc...) asparagine; by host glycosylation is found at Asn-233 and Asn-345. An N-linked (GlcNAc...) asparagine; by host glycan is attached at Asn-397. Residues 485 to 504 traverse the membrane as a helical segment; that stretch reads LLITFCFGWVLIPACTLAIL. At 505-626 the chain is on the cytoplasmic side; that stretch reads LVLKFFANIL…NLFRYKSRCY (122 aa). Residues 514 to 531 form a binding to the ribonucleoprotein region; sequence LHTSNQENRFKAILRKIK. CCHC-type zinc fingers lie at residues 543–563 and 568–589; these read CEICKYECETLKELKAHNLSC and CPYCFTHCEPTETAIQAHYKVC. Binding to the ribonucleoprotein regions lie at residues 586-603, 590-601, and 609-623; these read YKVCQATHRFREDLKKTV, QATHRFREDLKK, and GPGCYRTLNLFRYKS. The ITAM domain occupies 609–632; it reads GPGCYRTLNLFRYKSRCYILTMWT. The YxxL signature appears at 613–616; it reads YRTL. A helical membrane pass occupies residues 627 to 647; that stretch reads ILTMWTLLLIIESILWAASAA. Over 648 to 1105 the chain is Lumenal; that stretch reads EIPLVPLWTD…VMGIINGNWV (458 aa). 8 disulfide bridges follow: Cys-733–Cys-768, Cys-737–Cys-775, Cys-749–Cys-883, Cys-763–Cys-894, Cys-778–Cys-902, Cys-804–Cys-813, Cys-821–Cys-830, and Cys-861–Cys-865. Residues 755 to 775 form a fusion loop region; the sequence is YEYENSWACNPPDCPGVGTGC. The N-linked (GlcNAc...) asparagine; by host glycan is linked to Asn-926. 5 disulfides stabilise this stretch: Cys-968–Cys-998, Cys-991–Cys-1043, Cys-1008–Cys-1013, Cys-1044–Cys-1049, and Cys-1083–Cys-1087. Residues 1106–1125 form a helical membrane-spanning segment; that stretch reads VLIVLCVLLLFSLILLSILC. The segment at 1120–1133 is binding to the ribonucleoprotein; it reads LLSILCPVRKHKKS. Over 1126–1133 the chain is Cytoplasmic; sequence PVRKHKKS.

The protein belongs to the hantavirus envelope glycoprotein family. In terms of assembly, homodimer. Homotetramer; forms heterotetrameric Gn-Gc spikes in the pre-fusion conformation. Interacts (via C-terminus) with the nucleoprotein. Interacts with host TUFM; this interaction contributes to the virus-induced degradation of mitochondria by autophagy, which leads to degradation of host MAVS and inhibition of type I interferon (IFN) responses. Interacts with host MAP1LC3B; this interaction contributes to the virus-induced degradation of mitochondria by autophagy, which leads to degradation of host MAVS and inhibition of type I interferon (IFN) responses. As to quaternary structure, homodimer. Homotetramer; forms heterotetrameric Gn-Gc spikes in the pre-fusion conformation. Homotrimer; forms homotrimer in the post-fusion conformation at acidic pH. Interacts (via C-terminus) with the nucleoprotein. Post-translationally, envelope polyprotein precursor is quickly cleaved in vivo just after synthesis, presumably by host signal peptidase.

It is found in the virion membrane. The protein resides in the host cell surface. The protein localises to the host Golgi apparatus membrane. It localises to the host endoplasmic reticulum membrane. Its subcellular location is the host mitochondrion. Functionally, forms homotetramers with glycoprotein C at the surface of the virion. Attaches the virion to host cell receptors including integrin ITGAV/ITGB3. This attachment induces virion internalization predominantly through clathrin-dependent endocytosis. Mediates the assembly and budding of infectious virus particles through its interaction with the nucleocapsid protein and the viral genome. May dysregulate normal immune and endothelial cell responses through an ITAM motif. Translocates to mitochondria, binds to host TUFM and recruits MAP1LC3B. These interactions induce mitochondrial autophagy and therefore destruction of host MAVS leading to inhibition of type I interferon (IFN) responses. Concomitant breakdown of glycoprotein N is apparently prevented by the nucleoprotein that may inhibit Gn-stimulated autophagosome-lysosome fusion. Interacts with the viral genomic RNA. In terms of biological role, forms homotetramers with glycoprotein N at the surface of the virion. Attaches the virion to host cell receptors including integrin ITGAV/ITGB3. This attachment induces virion internalization predominantly through clathrin-dependent endocytosis. Class II fusion protein that promotes fusion of viral membrane with host endosomal membrane after endocytosis of the virion. This is Envelopment polyprotein (GP) from Homo sapiens (Human).